Consider the following 231-residue polypeptide: Fibrillarin-like rRNA/tRNA 2'-O-methyltransferase (231 aa).

Residues Thr88–Thr89, Glu106–Phe107, Asp131–Ala132, and Asp151–Gln154 contribute to the S-adenosyl-L-methionine site.

This sequence belongs to the methyltransferase superfamily. Fibrillarin family. Interacts with nop5. Component of box C/D small ribonucleoprotein (sRNP) particles that contain rpl7ae, FlpA and nop5, plus a guide RNA.

Functionally, involved in pre-rRNA and tRNA processing. Utilizes the methyl donor S-adenosyl-L-methionine to catalyze the site-specific 2'-hydroxyl methylation of ribose moieties in rRNA and tRNA. Site specificity is provided by a guide RNA that base pairs with the substrate. Methylation occurs at a characteristic distance from the sequence involved in base pairing with the guide RNA. This Methanococcus aeolicus (strain ATCC BAA-1280 / DSM 17508 / OCM 812 / Nankai-3) protein is Fibrillarin-like rRNA/tRNA 2'-O-methyltransferase.